The sequence spans 197 residues: dITP/XTP pyrophosphatase (197 aa).

Residue 8-13 (TGNAGK) coordinates substrate. Residues glutamate 40 and aspartate 69 each contribute to the Mg(2+) site. The Proton acceptor role is filled by aspartate 69. Substrate-binding positions include serine 70, 154–157 (FGYD), lysine 177, and 182–183 (HR).

Belongs to the HAM1 NTPase family. In terms of assembly, homodimer. Mg(2+) is required as a cofactor.

The catalysed reaction is XTP + H2O = XMP + diphosphate + H(+). The enzyme catalyses dITP + H2O = dIMP + diphosphate + H(+). It catalyses the reaction ITP + H2O = IMP + diphosphate + H(+). Pyrophosphatase that catalyzes the hydrolysis of nucleoside triphosphates to their monophosphate derivatives, with a high preference for the non-canonical purine nucleotides XTP (xanthosine triphosphate), dITP (deoxyinosine triphosphate) and ITP. Seems to function as a house-cleaning enzyme that removes non-canonical purine nucleotides from the nucleotide pool, thus preventing their incorporation into DNA/RNA and avoiding chromosomal lesions. The chain is dITP/XTP pyrophosphatase (rdgB) from Shigella flexneri.